A 108-amino-acid polypeptide reads, in one-letter code: Peptidyl-prolyl cis-trans isomerase FKBP1B (108 aa).

The region spanning 20–108 is the PPIase FKBP-type domain; sequence GQTCVVHYTG…IFDVELLNLE (89 aa).

As to quaternary structure, identified in a complex composed of RYR2, FKBP1B, PKA catalytic subunit, PRKAR2A, AKAP6, and the protein phosphatases PP2A and PP1. Interacts directly with RYR2.

Its subcellular location is the cytoplasm. It is found in the sarcoplasmic reticulum. The catalysed reaction is [protein]-peptidylproline (omega=180) = [protein]-peptidylproline (omega=0). Inhibited by both FK506 and rapamycin. In terms of biological role, has the potential to contribute to the immunosuppressive and toxic effects of FK506 and rapamycin. PPIases accelerate the folding of proteins. It catalyzes the cis-trans isomerization of proline imidic peptide bonds in oligopeptides. This Bos taurus (Bovine) protein is Peptidyl-prolyl cis-trans isomerase FKBP1B (FKBP1B).